The following is a 305-amino-acid chain: Ribonucleoside-diphosphate reductase small subunit (305 aa).

Residues E64, E94, and H97 each coordinate Fe cation. Y101 is a catalytic residue. Residues 150 to 170 (VLVFLLIEGIFFISSFYSIAT) traverse the membrane as a helical segment. The Fe cation site is built by E157, E191, and H194.

It belongs to the ribonucleoside diphosphate reductase small chain family. Heterotetramer composed of a homodimer of the large subunit (R1) and a homodimer of the small subunit (R2). Larger multisubunit protein complex are also active, composed of (R1)n(R2)n. The cofactor is Fe cation.

It is found in the host membrane. It carries out the reaction a 2'-deoxyribonucleoside 5'-diphosphate + [thioredoxin]-disulfide + H2O = a ribonucleoside 5'-diphosphate + [thioredoxin]-dithiol. In terms of biological role, ribonucleoside-diphosphate reductase holoenzyme provides the precursors necessary for viral DNA synthesis. Allows virus growth in non-dividing cells, as well as reactivation from latency in infected hosts. Catalyzes the biosynthesis of deoxyribonucleotides from the corresponding ribonucleotides. The protein is Ribonucleoside-diphosphate reductase small subunit of Equus caballus (Horse).